The chain runs to 460 residues: Armadillo repeat-containing protein LFR (460 aa).

Residues 1-30 (MQKRELGKSGGNSGGSSGPPAKRGRPFGST) are disordered. A compositionally biased stretch (gly residues) spans 8-17 (KSGGNSGGSS). ARM repeat units lie at residues 227–269 (DNEV…NLAH), 323–362 (NEPFISPLIPQIHKRLIDLLSIQAVDAQAAAVGALYNLVE), and 366–407 (DCRL…NLVS).

In terms of assembly, interacts with AS2. Expressed in roots, leaves, stems and flowers.

It localises to the nucleus. Its function is as follows. Involved in leaf and flower development. Plays roles in leaf development partly by associating with AS2 and repressing KNAT1/BP transcription. Required for the formation of anther cell layers and normal expression of genes that regulates anther development. The sequence is that of Armadillo repeat-containing protein LFR from Arabidopsis thaliana (Mouse-ear cress).